Consider the following 366-residue polypeptide: Glucose 1-dehydrogenase (366 aa).

Cys-39 is a binding site for Zn(2+). Residue Thr-41 coordinates substrate. Residues His-66 and Glu-67 each contribute to the Zn(2+) site. Position 89 (Asn-89) interacts with substrate. The Zn(2+) site is built by Cys-93, Cys-96, Cys-99, and Cys-107. Substrate contacts are provided by Glu-114, Gln-150, and Asp-154. Gln-150 lines the Zn(2+) pocket. NADP(+) is bound by residues 189 to 192 (TGPI), 211 to 213 (NRR), 277 to 279 (FGF), 305 to 307 (LVN), and Lys-354. Substrate is bound at residue Asn-307.

This sequence belongs to the zinc-containing alcohol dehydrogenase family. Glucose 1-dehydrogenase subfamily. In terms of assembly, homotetramer. Zn(2+) serves as cofactor.

The catalysed reaction is D-glucose + NAD(+) = D-glucono-1,5-lactone + NADH + H(+). It catalyses the reaction D-glucose + NADP(+) = D-glucono-1,5-lactone + NADPH + H(+). It carries out the reaction D-galactose + NAD(+) = D-galactono-1,4-lactone + NADH + H(+). The enzyme catalyses D-galactose + NADP(+) = D-galactono-1,5-lactone + NADPH + H(+). The catalysed reaction is an aldopyranose + NAD(+) = aldono-1,5-lactone + NADH + H(+). It catalyses the reaction an aldopyranose + NADP(+) = aldono-1,5-lactone + NADPH + H(+). With respect to regulation, inhibited by EDTA in vitro. In terms of biological role, catalyzes the NAD(P)(+)-dependent oxidation of D-glucose to D-gluconate via gluconolactone. Displays broad substrate specificity since it is able to catalyze the oxidation of a number of alternative aldose sugars, such as D-galactose, D-xylose and L-arabinose, to the corresponding glyconate. Can utilize both NAD(+) and NADP(+) as electron acceptor. Physiologically, seems to be involved in the degradation of both glucose and galactose through a non-phosphorylative variant of the Entner-Doudoroff pathway. This chain is Glucose 1-dehydrogenase, found in Saccharolobus solfataricus (Sulfolobus solfataricus).